We begin with the raw amino-acid sequence, 156 residues long: Type II secretion system core protein G (156 aa).

Residues 1 to 22 constitute a propeptide, leader sequence; it reads MQQSQRGCGQNSYGQSGYRQRG. Residue phenylalanine 23 is modified to N-methylphenylalanine. A helical transmembrane segment spans residues 23–43; the sequence is FTLLEIMVVIVILGVLASLVV.

Belongs to the GSP G family. Type II secretion system is composed of four main components: the outer membrane complex, the inner membrane complex, the cytoplasmic secretion ATPase and the periplasm-spanning pseudopilus. Forms homomultimers. In terms of processing, cleaved by the prepilin peptidase. Methylated by prepilin peptidase at the amino group of the N-terminal phenylalanine once the leader sequence is cleaved.

It is found in the cell inner membrane. Its function is as follows. Core component of the type II secretion system required for the energy-dependent secretion of extracellular factors such as proteases and toxins from the periplasm. Pseudopilin (pilin-like) protein that polymerizes to form the pseudopilus. Further polymerization triggers pseudopilus growth. This Pectobacterium carotovorum subsp. carotovorum (Erwinia carotovora subsp. carotovora) protein is Type II secretion system core protein G (outG).